The chain runs to 144 residues: Large ribosomal subunit protein uL15 (144 aa).

The segment at 1–45 (MNLNTLSPDPGSRPSRRRVGRGIGSGLGKTCGKGHKGQKSRAGGY) is disordered. The segment covering 21–31 (RGIGSGLGKTC) has biased composition (gly residues).

It belongs to the universal ribosomal protein uL15 family. In terms of assembly, part of the 50S ribosomal subunit.

Its function is as follows. Binds to the 23S rRNA. In Legionella pneumophila (strain Corby), this protein is Large ribosomal subunit protein uL15.